The sequence spans 86 residues: UPF0297 protein LSL_1110 (86 aa).

This sequence belongs to the UPF0297 family.

The protein is UPF0297 protein LSL_1110 of Ligilactobacillus salivarius (strain UCC118) (Lactobacillus salivarius).